Here is a 170-residue protein sequence, read N- to C-terminus: Large ribosomal subunit protein uL11 (170 aa).

This sequence belongs to the universal ribosomal protein uL11 family. In terms of assembly, part of the ribosomal stalk of the 50S ribosomal subunit. Interacts with L10 and the large rRNA to form the base of the stalk. L10 forms an elongated spine to which L12 dimers bind in a sequential fashion forming a multimeric L10(L12)X complex.

In terms of biological role, forms part of the ribosomal stalk which helps the ribosome interact with GTP-bound translation factors. In Saccharolobus islandicus (strain Y.N.15.51 / Yellowstone #2) (Sulfolobus islandicus), this protein is Large ribosomal subunit protein uL11.